We begin with the raw amino-acid sequence, 346 residues long: Glucose-6-phosphatase 3 (346 aa).

Topologically, residues 1–24 (MESTLSAGIIMAEALQNRLPGLEN) are lumenal. A helical transmembrane segment spans residues 25-45 (MWLWVTFLGDPKNLFQFCFPA). Topologically, residues 46-56 (AYYASRRLGIS) are cytoplasmic. A helical transmembrane segment spans residues 57 to 77 (VLWITFIAEWLNLVFKWFLFG). Over 78-108 (DRPFWWVHESGYSTQTPIQIHQFPSSCETGP) the chain is Lumenal. Arg79 is a substrate binding site. The helical transmembrane segment at 109-129 (GSPSGHCMITGAALWPVMTAI) threads the bilayer. The Proton donor role is filled by His114. Over 130 to 138 (SSQVASRSR) the chain is Cytoplasmic. A helical membrane pass occupies residues 139 to 159 (SPWVRVIPGLAYCTFLLAVGL). At 160–167 (SRVFLLAH) the chain is on the lumenal side. Position 161 (Arg161) interacts with substrate. Catalysis depends on His167, which acts as the Nucleophile. The helical transmembrane segment at 168–186 (FPHQVLGGLIVGAALGWLM) threads the bilayer. The Cytoplasmic segment spans residues 187-197 (SPRVPMERELS). Residues 198–218 (FYGLTALALMLGASLMYWTLF) traverse the membrane as a helical segment. Residues 219 to 254 (TLGLDLSWSINLASKWCERPEWVHMDSRPFASLSRD) are Lumenal-facing. The helical transmembrane segment at 255–273 (SGSALGLGIALHTPCYAQI) threads the bilayer. At 274–283 (RRAHLGNGQK) the chain is on the cytoplasmic side. A helical membrane pass occupies residues 284–304 (IACFVLAMGLLVFLEWLGYPP). The Lumenal portion of the chain corresponds to 305-307 (QIS). A helical membrane pass occupies residues 308–328 (LFYIFNFLKYTLWPCLVLALV). The Cytoplasmic portion of the chain corresponds to 329 to 346 (PWVVHTLSDQEAPPIRSS).

It belongs to the glucose-6-phosphatase family. Widely expressed. Highly expressed in heart and testis and to a lower extent in spleen, stomach, small intestine, skeletal muscle and uterus. Expressed in muscle, brain, thymus, lung, kidney, spleen and pancreas (at protein level). In the brain, expressed in astrocytes (at protein level).

The protein localises to the endoplasmic reticulum membrane. It carries out the reaction D-glucose 6-phosphate + H2O = D-glucose + phosphate. The protein operates within carbohydrate biosynthesis; gluconeogenesis. Its activity is regulated as follows. Inhibited by vanadate. In terms of biological role, hydrolyzes glucose-6-phosphate to glucose in the endoplasmic reticulum. May form with the glucose-6-phosphate transporter (SLC37A4/G6PT) a ubiquitously expressed complex responsible for glucose production through glycogenolysis and gluconeogenesis. Probably required for normal neutrophil function. In Mus musculus (Mouse), this protein is Glucose-6-phosphatase 3 (G6pc3).